The chain runs to 122 residues: Conotoxin flf14.2 (122 aa).

Positions 1-22 (MGFRVLVLIVMVTTSALPFTFS) are cleaved as a signal peptide. Positions 23 to 96 (EESGRSPFRP…AESPVGQKRW (74 aa)) are excised as a propeptide. The disordered stretch occupies residues 53-91 (RADGQPSDMRQPEMRRPEMRRPEVRRPEVRQPEFAESPV). The segment covering 62-85 (RQPEMRRPEMRRPEVRRPEVRQPE) has biased composition (basic and acidic residues). 2 disulfides stabilise this stretch: cysteine 101/cysteine 121 and cysteine 105/cysteine 117.

It belongs to the conotoxin R superfamily. As to expression, expressed by the venom duct.

Its subcellular location is the secreted. This is Conotoxin flf14.2 from Conus anabathrum floridanus (Florida cone).